A 428-amino-acid chain; its full sequence is Cyclic AMP-responsive element-binding protein 3-like protein 4 (428 aa).

A required for transcriptional activation region spans residues 1-68; that stretch reads MLLGSLFEQT…EFLQMMINPN (68 aa). The Cytoplasmic portion of the chain corresponds to 1–294; sequence MLLGSLFEQT…QTSNKAAQTS (294 aa). The tract at residues 71-111 is disordered; sequence YSTGPAAAESPESDSGFSDDPRPDTPPQSETSPPLPQPTPV. Residues 216–279 form the bZIP domain; it reads ILKKVRRKIR…ISLITQLRKL (64 aa). Residues 218 to 247 form a basic motif region; that stretch reads KKVRRKIRNKQSAQDSRRRKKEYIDGLESR. A leucine-zipper region spans residues 258–279; it reads LHKKVVELEKHNISLITQLRKL. A helical; Signal-anchor for type II membrane protein membrane pass occupies residues 295 to 315; that stretch reads TCVLILLFSLALLVFPSYSPF. The Lumenal segment spans residues 316–428; it reads RSRPSASQED…LSKTARADEM (113 aa). The segment at 339–428 is disordered; the sequence is NKGGFSEVAD…LSKTARADEM (90 aa). Residues 354-368 are compositionally biased toward basic and acidic residues; that stretch reads TLHRAQQREEGDPGR. N-linked (GlcNAc...) asparagine glycosylation is present at Asn-418.

The protein belongs to the bZIP family. ATF subfamily. Binds DNA as a dimer. In terms of processing, controlled by regulated intramembrane proteolysis (RIP). A fragment containing the cytoplasmic transcription factor domain is released by proteolysis. The cleavage seems to be performed sequentially by site-1 and site-2 proteases (PS1 and PS2).

Its subcellular location is the endoplasmic reticulum membrane. It localises to the nucleus. In terms of biological role, transcriptional activator. The sequence is that of Cyclic AMP-responsive element-binding protein 3-like protein 4 (creb3l4) from Xenopus tropicalis (Western clawed frog).